Reading from the N-terminus, the 406-residue chain is Probable mannan endo-1,4-beta-mannosidase C (406 aa).

The signal sequence occupies residues 1–20 (MLINFEKVLSLALLAGSVSG). Residue Asn58 is glycosylated (N-linked (GlcNAc...) asparagine). Substrate is bound at residue Trp80. N-linked (GlcNAc...) asparagine glycosylation is found at Asn86 and Asn114. Asn201 lines the substrate pocket. The active-site Proton donor is Glu202. Residue Tyr287 participates in substrate binding. The active-site Nucleophile is the Glu320. Asn338 carries N-linked (GlcNAc...) asparagine glycosylation. Trp362 serves as a coordination point for substrate.

Belongs to the glycosyl hydrolase 5 (cellulase A) family.

The protein localises to the secreted. The enzyme catalyses Random hydrolysis of (1-&gt;4)-beta-D-mannosidic linkages in mannans, galactomannans and glucomannans.. Endo-1,4-mannanase, a crucial enzyme for depolymerization of seed galactomannans and wood galactoglucomannans. This chain is Probable mannan endo-1,4-beta-mannosidase C (manC), found in Aspergillus terreus (strain NIH 2624 / FGSC A1156).